A 382-amino-acid polypeptide reads, in one-letter code: Mannitol-1-phosphate 5-dehydrogenase (382 aa).

Position 4 to 15 (4 to 15 (AVHFGAGNIGRG)) interacts with NAD(+).

The protein belongs to the mannitol dehydrogenase family. In terms of assembly, monomer.

The enzyme catalyses D-mannitol 1-phosphate + NAD(+) = beta-D-fructose 6-phosphate + NADH + H(+). This Streptococcus mutans serotype c (strain ATCC 700610 / UA159) protein is Mannitol-1-phosphate 5-dehydrogenase (mtlD).